The primary structure comprises 1142 residues: MAEPGGAAGRSHPEDGSASEGEKEGNNESHMVSPPEKDDGQKGEEAVGSTEHPEEVTTQAEAAIEEGEVETEGEAAVEGEEEAVSYGDAESEEEYYYTETSSPEGQISAADTTYPYFSPPQELPGEEAYDSVSGEAGLQGFQQEATGPPESRERRVTSPEPSHGVLGPSEQMGQVTSGPAVGRLTGSTEEPQGQVLPMGVQHRFRLSHGSDIESSDLEEFVSQEPVIPPGVPDAHPREGDLPVFQDQIQQPSTEEGAMAERVESEGSDEEAEDEGSQLVVLDPDHPLMVRFQAALKNYLNRQIEKLKLDLQELVVATKQSRAQRQELGVNLYEVQQHLVHLQKLLEKSHDRHAMASSERRQKEEELQAARALYTKTCAAANEERKKLAALQTEMENLALHLFYMQNIDQDMRDDIRVMTQVVKKAETERIRAEIEKKKQDLYVDQLTTRAQQLEEDIALFEAQYLAQAEDTRILRKAVSEACTEIDAISVEKRRIMQQWASSLVGMKHRDEAHRAVLEALRGCQHQAKSTDGEIEAYKKSIMKEEEKNEKLASILNRTETEATLLQKLTTQCLTKQVALQSQFNTYRLTLQDTEDALSQDQLEQMILTEELQAIRQAIQGELELRRKTDAAIREKLQEHMTSNKTTKYFNQLILRLQKEKTNMMTHLSKINGDIAQTTLDITHTSSRLDAHQKTLVELDQDVKKVNELITNSQSEISRRTILIERKQGLINFLNKQLERMVSELGGEEVGPLELEIKRLSKLIDEHDGKAVQAQVTWLRLQQEMVKVTQEQEEQLASLDASKKELHIMEQKKLRVESKIEQEKKEQKEIEHHMKDLDNDLKKLNMLMNKNRCSSEELEQNNRVTENEFVRSLKASERETIKMQDKLNQLSEEKATLLNQLVEAEHQIMLWEKKIQLAKEMRSSVDSEIGQTEIRAMKGEIHRMKVRLGQLLKQQEKMIRAMELAVARRETVTTQAEGQRKMDRKALTRTDFHHKQLELRRKIRDVRKATDECTKTVLELEETQRNVSSSLLEKQEKLSVIQADFDTLEADLTRLGALKRQNLSEIVALQTRLKHLQAVKEGRYVFLFRSKQSLVLERQRLDKRLALIATILDRVRDEYPQFQEALHKVSQMIANKLESPGPS.

Disordered stretches follow at residues 1–197 (MAEP…QVLP) and 251–274 (PSTE…AEDE). Composition is skewed to basic and acidic residues over residues 11 to 27 (SHPE…EGNN) and 35 to 55 (PEKD…HPEE). The span at 63–96 (AIEEGEVETEGEAAVEGEEEAVSYGDAESEEEYY) shows a compositional bias: acidic residues. Ser-252 carries the post-translational modification Phosphoserine. Acidic residues predominate over residues 265 to 274 (EGSDEEAEDE). Coiled coils occupy residues 293–319 (AALK…ATKQ), 349–470 (HDRH…QAED), 526–627 (QAKS…LRRK), 684–950 (TSSR…LGQL), and 1005–1054 (VRKA…LTRL).

The protein belongs to the CCDC40 family.

It localises to the cytoplasm. The protein localises to the cell projection. The protein resides in the cilium. Its function is as follows. Required for assembly of dynein regulatory complex (DRC) and inner dynein arm (IDA) complexes, which are responsible for ciliary beat regulation, thereby playing a central role in motility in cilia and flagella. Probably acts together with CCDC39 to form a molecular ruler that determines the 96 nanometer (nm) repeat length and arrangements of components in cilia and flagella. Not required for outer dynein arm complexes assembly. Required for axonemal recruitment of CCDC39. The chain is Coiled-coil domain-containing protein 40 from Homo sapiens (Human).